A 239-amino-acid chain; its full sequence is UDP-2,3-diacylglucosamine hydrolase (239 aa).

Positions 8, 10, 41, 78, and 113 each coordinate Mn(2+). Substrate is bound at residue 78-79 (NR). The substrate site is built by Asp-121, Ser-159, Asn-163, Lys-166, and His-194. Mn(2+) is bound by residues His-194 and His-196.

Belongs to the LpxH family. The cofactor is Mn(2+).

It localises to the cell inner membrane. The catalysed reaction is UDP-2-N,3-O-bis[(3R)-3-hydroxytetradecanoyl]-alpha-D-glucosamine + H2O = 2-N,3-O-bis[(3R)-3-hydroxytetradecanoyl]-alpha-D-glucosaminyl 1-phosphate + UMP + 2 H(+). It participates in glycolipid biosynthesis; lipid IV(A) biosynthesis; lipid IV(A) from (3R)-3-hydroxytetradecanoyl-[acyl-carrier-protein] and UDP-N-acetyl-alpha-D-glucosamine: step 4/6. Its function is as follows. Hydrolyzes the pyrophosphate bond of UDP-2,3-diacylglucosamine to yield 2,3-diacylglucosamine 1-phosphate (lipid X) and UMP by catalyzing the attack of water at the alpha-P atom. Involved in the biosynthesis of lipid A, a phosphorylated glycolipid that anchors the lipopolysaccharide to the outer membrane of the cell. The chain is UDP-2,3-diacylglucosamine hydrolase from Shewanella oneidensis (strain ATCC 700550 / JCM 31522 / CIP 106686 / LMG 19005 / NCIMB 14063 / MR-1).